Consider the following 353-residue polypeptide: Stomatin-like protein 2, mitochondrial (353 aa).

Residues 1–28 (MLARAARGTGALLLRGSVQASGRVPRRA) constitute a mitochondrion transit peptide. A Phosphoserine; by PKC/PRKCZ modification is found at serine 17. Residue tyrosine 124 is modified to Phosphotyrosine. Lysine 145 is subject to N6-acetyllysine; alternate. Lysine 145 is modified (N6-succinyllysine; alternate). Residues 215–252 (INVAEGKKQAQILASEAEKAEQINQAAGEASAVLAKAK) adopt a coiled-coil conformation. Lysine 233 bears the N6-acetyllysine mark. Residues 324-353 (VPGAQNSSQSRRDVQATDTSIEELGRVKLS) are disordered. Residue serine 330 is modified to Phosphoserine.

The protein belongs to the band 7/mec-2 family. As to quaternary structure, forms homooligomers. Interacts with MFN2; may form heterooligomers. Interacts with PHB1 and PHB2; recruits them to cardiolipin-enriched mitochondrial membranes and stabilizes them. Interacts with CACNA2D2.

The protein resides in the cell membrane. It is found in the mitochondrion. Its subcellular location is the mitochondrion inner membrane. It localises to the mitochondrion intermembrane space. The protein localises to the membrane raft. The protein resides in the cytoplasm. It is found in the cytoskeleton. Mitochondrial protein that probably regulates the biogenesis and the activity of mitochondria. Stimulates cardiolipin biosynthesis, binds cardiolipin-enriched membranes where it recruits and stabilizes some proteins including prohibitin and may therefore act in the organization of functional microdomains in mitochondrial membranes. Through regulation of the mitochondrial function may play a role into several biological processes including cell migration, cell proliferation, T-cell activation, calcium homeostasis and cellular response to stress. May play a role in calcium homeostasis through negative regulation of calcium efflux from mitochondria. Required for mitochondrial hyperfusion a pro-survival cellular response to stress which results in increased ATP production by mitochondria. May also regulate the organization of functional domains at the plasma membrane and play a role in T-cell activation through association with the T-cell receptor signaling complex and its regulation. The chain is Stomatin-like protein 2, mitochondrial (Stoml2) from Mus musculus (Mouse).